The following is a 271-amino-acid chain: 5-amino-6-(5-phospho-D-ribitylamino)uracil phosphatase YbjI (271 aa).

The Nucleophile role is filled by D9. Mg(2+) is bound at residue D9. M10 provides a ligand contact to phosphate. D11 provides a ligand contact to Mg(2+). Residues 44–45 (SG) and K192 each bind phosphate. D215 is a Mg(2+) binding site. N218 serves as a coordination point for phosphate.

This sequence belongs to the HAD-like hydrolase superfamily. Cof family. It depends on Mg(2+) as a cofactor. Mn(2+) serves as cofactor. Co(2+) is required as a cofactor. The cofactor is Zn(2+).

The catalysed reaction is 5-amino-6-(5-phospho-D-ribitylamino)uracil + H2O = 5-amino-6-(D-ribitylamino)uracil + phosphate. Its pathway is cofactor biosynthesis; riboflavin biosynthesis; 5-amino-6-(D-ribitylamino)uracil from GTP: step 4/4. Its function is as follows. Catalyzes the dephosphorylation of 5-amino-6-(5-phospho-D-ribitylamino)uracil, and thus could be involved in the riboflavin biosynthesis pathway. Is also able to dephosphorylate flavin mononucleotide (FMN), erythrose 4-phosphate and other phosphoric acid esters. The polypeptide is 5-amino-6-(5-phospho-D-ribitylamino)uracil phosphatase YbjI (ybjI) (Escherichia coli (strain K12)).